A 390-amino-acid polypeptide reads, in one-letter code: cAMP-dependent protein kinase regulatory subunit (390 aa).

Over residues 1–17 (MSASGFTSPFGANSNPF) the composition is skewed to polar residues. Residues 1-81 (MSASGFTSPF…RPQNPDGYPA (81 aa)) are disordered. The interval 1–129 (MSASGFTSPF…RLKKAIQGNF (129 aa)) is dimerization and phosphorylation. Ser-90 is modified (phosphoserine). 3',5'-cyclic AMP is bound by residues 130 to 261 (LFSH…EEVP), Glu-208, Arg-217, 262 to 383 (ILST…GVEE), Glu-329, and Arg-338.

It belongs to the cAMP-dependent kinase regulatory chain family. As to quaternary structure, tetramer, composed of 2 regulatory (R) and 2 catalytic (C) subunits. In the presence of cAMP it dissociates into 2 active monomeric C subunits and an R dimer.

The protein is cAMP-dependent protein kinase regulatory subunit (SUM1) of Pyricularia oryzae (strain 70-15 / ATCC MYA-4617 / FGSC 8958) (Rice blast fungus).